A 260-amino-acid polypeptide reads, in one-letter code: Uroplakin-1b (260 aa).

Over 1 to 15 the chain is Cytoplasmic; the sequence is MAKDNSTVRCFQGLL. The helical transmembrane segment at 16–36 threads the bilayer; that stretch reads IFGNVIIGCCGIALTAECIFF. Residues 37-60 lie on the Extracellular side of the membrane; that stretch reads VSDQHSLYPLLEATDNDDIYGAAW. Residues 61–81 traverse the membrane as a helical segment; that stretch reads IGIFVGICLFCLSVLGIVGIM. The Cytoplasmic portion of the chain corresponds to 82 to 86; the sequence is KSSRK. Residues 87-107 traverse the membrane as a helical segment; it reads ILLAYFILMFIVYAFEVASCI. Residues 108 to 229 are Extracellular-facing; sequence TAATQQDFFT…ELISGPMNRH (122 aa). A helical transmembrane segment spans residues 230–250; it reads AWGVAWFGFAILCWTFWVLLG. At 251 to 260 the chain is on the cytoplasmic side; it reads TMFYWSRIEY.

It belongs to the tetraspanin (TM4SF) family. In terms of assembly, heterodimer with uroplakin-3A (UPK3A) or uroplakin-3B (UPK3B). N-glycosylated with high-mannose oligosaccharides. Bladder epithelium.

The protein resides in the membrane. Component of the asymmetric unit membrane (AUM); a highly specialized biomembrane elaborated by terminally differentiated urothelial cells. May play an important role in normal bladder epithelial physiology, possibly in regulating membrane permeability of superficial umbrella cells or in stabilizing the apical membrane through AUM/cytoskeletal interactions. The polypeptide is Uroplakin-1b (UPK1B) (Homo sapiens (Human)).